The chain runs to 321 residues: Probable GDP-L-fucose synthase (321 aa).

Position 8–14 (8–14 (GGTGLVG)) interacts with NADP(+). Tyr-136 (proton donor/acceptor) is an active-site residue. NADP(+) is bound by residues Lys-140, 163-166 (PCNI), and His-179. Residues Arg-187, Arg-215, and Asp-277 each contribute to the substrate site.

It belongs to the NAD(P)-dependent epimerase/dehydratase family. Fucose synthase subfamily. As to quaternary structure, homodimer.

It carries out the reaction GDP-beta-L-fucose + NADP(+) = GDP-4-dehydro-alpha-D-rhamnose + NADPH + H(+). The protein operates within nucleotide-sugar biosynthesis; GDP-L-fucose biosynthesis via de novo pathway; GDP-L-fucose from GDP-alpha-D-mannose: step 2/2. Catalyzes the two-step NADP-dependent conversion of GDP-4-dehydro-6-deoxy-D-mannose to GDP-fucose, involving an epimerase and a reductase reaction. In Drosophila melanogaster (Fruit fly), this protein is Probable GDP-L-fucose synthase (Gmer).